The chain runs to 225 residues: Cytidylate kinase (225 aa).

12–20 (GPSGAGKGT) lines the ATP pocket.

The protein belongs to the cytidylate kinase family. Type 1 subfamily.

The protein localises to the cytoplasm. It catalyses the reaction CMP + ATP = CDP + ADP. It carries out the reaction dCMP + ATP = dCDP + ADP. The chain is Cytidylate kinase from Stenotrophomonas maltophilia (strain R551-3).